The following is a 123-amino-acid chain: Small ribosomal subunit protein bS16 (123 aa).

The protein belongs to the bacterial ribosomal protein bS16 family.

The sequence is that of Small ribosomal subunit protein bS16 from Treponema pallidum (strain Nichols).